The primary structure comprises 213 residues: Protein brother (213 aa).

The interval 189–213 (HTPQTPPEDHHHRGGPGLPRGPMGW) is disordered. The span at 203-213 (GPGLPRGPMGW) shows a compositional bias: gly residues.

It belongs to the CBF-beta family.

The protein localises to the nucleus. Its function is as follows. Regulates the DNA-binding properties of Runt. This Drosophila melanogaster (Fruit fly) protein is Protein brother (Bro).